Reading from the N-terminus, the 376-residue chain is Queuine tRNA-ribosyltransferase (376 aa).

Catalysis depends on aspartate 89, which acts as the Proton acceptor. Residues 89–93 (DSGGF), aspartate 143, glutamine 187, and glycine 214 each bind substrate. Positions 245–251 (GVGKPQD) are RNA binding. Aspartate 264 serves as the catalytic Nucleophile. An RNA binding; important for wobble base 34 recognition region spans residues 269-273 (TRNAR). Zn(2+)-binding residues include cysteine 302, cysteine 304, cysteine 307, and histidine 333.

It belongs to the queuine tRNA-ribosyltransferase family. Homodimer. Within each dimer, one monomer is responsible for RNA recognition and catalysis, while the other monomer binds to the replacement base PreQ1. The cofactor is Zn(2+).

It carries out the reaction 7-aminomethyl-7-carbaguanine + guanosine(34) in tRNA = 7-aminomethyl-7-carbaguanosine(34) in tRNA + guanine. Its pathway is tRNA modification; tRNA-queuosine biosynthesis. Functionally, catalyzes the base-exchange of a guanine (G) residue with the queuine precursor 7-aminomethyl-7-deazaguanine (PreQ1) at position 34 (anticodon wobble position) in tRNAs with GU(N) anticodons (tRNA-Asp, -Asn, -His and -Tyr). Catalysis occurs through a double-displacement mechanism. The nucleophile active site attacks the C1' of nucleotide 34 to detach the guanine base from the RNA, forming a covalent enzyme-RNA intermediate. The proton acceptor active site deprotonates the incoming PreQ1, allowing a nucleophilic attack on the C1' of the ribose to form the product. After dissociation, two additional enzymatic reactions on the tRNA convert PreQ1 to queuine (Q), resulting in the hypermodified nucleoside queuosine (7-(((4,5-cis-dihydroxy-2-cyclopenten-1-yl)amino)methyl)-7-deazaguanosine). In Erwinia tasmaniensis (strain DSM 17950 / CFBP 7177 / CIP 109463 / NCPPB 4357 / Et1/99), this protein is Queuine tRNA-ribosyltransferase.